Consider the following 518-residue polypeptide: Putative Rieske 2Fe-2S iron-sulfur protein MSMEG_6410/MSMEI_6242 (518 aa).

K375 is covalently cross-linked (Isoglutamyl lysine isopeptide (Lys-Gln) (interchain with Q-Cter in protein Pup)). The Rieske domain occupies 431–518 (LYTFFKCLTD…KGHELRCQKL (88 aa)). [2Fe-2S] cluster is bound by residues C471, H473, C491, and H494.

[2Fe-2S] cluster serves as cofactor.

This chain is Putative Rieske 2Fe-2S iron-sulfur protein MSMEG_6410/MSMEI_6242, found in Mycolicibacterium smegmatis (strain ATCC 700084 / mc(2)155) (Mycobacterium smegmatis).